A 567-amino-acid polypeptide reads, in one-letter code: PEX5-related protein (567 aa).

The tract at residues 56 to 105 (SEPVSQPQTKAKKSEPSSKSSSLKKKADGSDLISADAEQRAQALRGPETS) is disordered. Serine 146 carries the post-translational modification Phosphoserine. The segment at 150–169 (LWSAEHRSQPELSTGKSALN) is disordered. 3 positions are modified to phosphoserine: serine 194, serine 198, and serine 202. TPR repeat units follow at residues 267 to 300 (WPGAFEEGLKRLKEGDLPVTILFMEAAILQDPGD), 301 to 334 (AEAWQFLGITQAENENEQAAIVALQRCLELQPNN), and 336 to 368 (KALMALAVSYTNTSHQQDACEALKNWIKQNPKY). Serine 386 and serine 388 each carry phosphoserine. TPR repeat units follow at residues 415–448 (PDLQTGLGVLFHLSGEFNRAIDAFNAALTVRPED), 450–482 (SLWNRLGATLANGDRSEEAVEAYTRALEIQPGF), and 484–516 (RSRYNLGISCINLGAYREAVSNFLTALSLQRKS).

Belongs to the peroxisomal targeting signal receptor family. In terms of assembly, interacts with RAB8B. Forms an obligate 4:4 complex with HCN2. Interacts with HCN3. Interacts with HCN4 with a 4:4 HCN4:PEX5L stoichiometry; reduces the effects of cAMP on the voltage-dependence and rate of activation of HCN4.

Its subcellular location is the cytoplasm. It localises to the membrane. Functionally, accessory subunit of hyperpolarization-activated cyclic nucleotide-gated (HCN) channels, regulating their cell-surface expression and cyclic nucleotide dependence. In Mus musculus (Mouse), this protein is PEX5-related protein (Pex5l).